Reading from the N-terminus, the 665-residue chain is Fructose-1,6-bisphosphatase class 3 (665 aa).

It belongs to the FBPase class 3 family. Mn(2+) is required as a cofactor.

The catalysed reaction is beta-D-fructose 1,6-bisphosphate + H2O = beta-D-fructose 6-phosphate + phosphate. The protein operates within carbohydrate biosynthesis; gluconeogenesis. In Clostridium acetobutylicum (strain ATCC 824 / DSM 792 / JCM 1419 / IAM 19013 / LMG 5710 / NBRC 13948 / NRRL B-527 / VKM B-1787 / 2291 / W), this protein is Fructose-1,6-bisphosphatase class 3.